A 231-amino-acid polypeptide reads, in one-letter code: MRVLVKLSGEALSGEGGRGFDPERVNYIVNEIKSAIEEGFKIGIVVGAGNLFRGVELKNLTMTRADQIGLLGTVMNSVYLKDIFERSGLKARIYSQIVNLPDVERVNYDSIESALRENSILIFAGGTSNPFFTTDTAAVLRAQEMRAKLVVKATKVDGVYDKDPKKFPDAKKIPHLTFSEAMKMGLKVMDAEAFALCKKLGITVKVINFFEPGTLLKALKGEDVGSTVVPD.

Residue 6 to 9 (KLSG) participates in ATP binding. The tract at residues 14–19 (GEGGRG) is involved in allosteric activation by GTP. Gly49 and Arg53 together coordinate ATP. Residues Asp66 and 127–134 (TSNPFFTT) contribute to the UMP site. ATP contacts are provided by Thr154, Tyr160, and Asp163.

This sequence belongs to the UMP kinase family. As to quaternary structure, homohexamer.

It is found in the cytoplasm. It carries out the reaction UMP + ATP = UDP + ADP. It functions in the pathway pyrimidine metabolism; CTP biosynthesis via de novo pathway; UDP from UMP (UMPK route): step 1/1. Its activity is regulated as follows. Allosterically activated by GTP. Inhibited by UTP. Its function is as follows. Catalyzes the reversible phosphorylation of UMP to UDP. This chain is Uridylate kinase, found in Thermotoga maritima (strain ATCC 43589 / DSM 3109 / JCM 10099 / NBRC 100826 / MSB8).